The sequence spans 284 residues: Tropomyosin (284 aa).

The stretch at 1 to 284 (MDAIKKKMQA…DQTFQELFGY (284 aa)) forms a coiled coil. Over residues 113 to 142 (LEKATHTADESDRVRKVMENRSFQDEERAN) the composition is skewed to basic and acidic residues. The tract at residues 113–143 (LEKATHTADESDRVRKVMENRSFQDEERANT) is disordered.

It belongs to the tropomyosin family.

Functionally, tropomyosin, in association with the troponin complex, plays a central role in the calcium dependent regulation of muscle contraction. This chain is Tropomyosin, found in Acanthocheilonema viteae (Filarial nematode worm).